The following is a 294-amino-acid chain: tRNA dimethylallyltransferase (294 aa).

9 to 16 (GPTASGKS) contacts ATP. 11-16 (TASGKS) contributes to the substrate binding site. The segment at 155 to 159 (QRVIR) is interaction with substrate tRNA.

The protein belongs to the IPP transferase family. In terms of assembly, monomer. Mg(2+) serves as cofactor.

The catalysed reaction is adenosine(37) in tRNA + dimethylallyl diphosphate = N(6)-dimethylallyladenosine(37) in tRNA + diphosphate. Its function is as follows. Catalyzes the transfer of a dimethylallyl group onto the adenine at position 37 in tRNAs that read codons beginning with uridine, leading to the formation of N6-(dimethylallyl)adenosine (i(6)A). In Leuconostoc citreum (strain KM20), this protein is tRNA dimethylallyltransferase.